A 534-amino-acid polypeptide reads, in one-letter code: Cytochrome c oxidase subunit 1 (534 aa).

Residues 16 to 36 traverse the membrane as a helical segment; the sequence is VLYFMLAIFSGMAGTAMSLII. 3 residues coordinate Ca(2+): Glu-39, Ala-42, and Gly-44. The next 6 membrane-spanning stretches (helical) occupy residues 57 to 77, 101 to 121, 147 to 167, 182 to 202, 235 to 255, and 267 to 287; these read VLVV…ALIG, IAFW…LVES, AIFA…NFIV, LPLF…SLPV, LFYF…FGII, and VFGE…GFLV. His-62 is a binding site for Fe(II)-heme a. His-241 is a binding site for Cu cation. Positions 241–245 form a cross-link, 1'-histidyl-3'-tyrosine (His-Tyr); the sequence is HPEVY. An O2-binding site is contributed by Tyr-245. Cu cation is bound by residues His-290 and His-291. 2 consecutive transmembrane segments (helical) span residues 310 to 330 and 338 to 358; these read MIIA…IYGG and MLYA…GVAL. The Mg(2+) site is built by His-368 and Asp-369. Helical transmembrane passes span 372 to 392 and 414 to 434; these read YVVG…LFAG and FWLI…LGIN. His-376 is a heme a3 binding site. His-378 lines the Fe(II)-heme a pocket. Pro-441 provides a ligand contact to Ca(2+). The chain crosses the membrane as a helical span at residues 452–472; sequence YVASIGSFIATLSLFLFIYIL.

The protein belongs to the heme-copper respiratory oxidase family. As to quaternary structure, component of the cytochrome c oxidase (complex IV, CIV), a multisubunit enzyme composed of a catalytic core of 3 subunits and several supernumerary subunits. The complex exists as a monomer or a dimer and forms supercomplexes (SCs) in the inner mitochondrial membrane with ubiquinol-cytochrome c oxidoreductase (cytochrome b-c1 complex, complex III, CIII). Heme serves as cofactor. The cofactor is Cu cation.

The protein localises to the mitochondrion inner membrane. The catalysed reaction is 4 Fe(II)-[cytochrome c] + O2 + 8 H(+)(in) = 4 Fe(III)-[cytochrome c] + 2 H2O + 4 H(+)(out). The protein operates within energy metabolism; oxidative phosphorylation. In terms of biological role, component of the cytochrome c oxidase, the last enzyme in the mitochondrial electron transport chain which drives oxidative phosphorylation. The respiratory chain contains 3 multisubunit complexes succinate dehydrogenase (complex II, CII), ubiquinol-cytochrome c oxidoreductase (cytochrome b-c1 complex, complex III, CIII) and cytochrome c oxidase (complex IV, CIV), that cooperate to transfer electrons derived from NADH and succinate to molecular oxygen, creating an electrochemical gradient over the inner membrane that drives transmembrane transport and the ATP synthase. Cytochrome c oxidase is the component of the respiratory chain that catalyzes the reduction of oxygen to water. Electrons originating from reduced cytochrome c in the intermembrane space (IMS) are transferred via the dinuclear copper A center (CU(A)) of subunit 2 and heme A of subunit 1 to the active site in subunit 1, a binuclear center (BNC) formed by heme A3 and copper B (CU(B)). The BNC reduces molecular oxygen to 2 water molecules using 4 electrons from cytochrome c in the IMS and 4 protons from the mitochondrial matrix. The protein is Cytochrome c oxidase subunit 1 (COXI) of Saccharomyces paradoxus (Yeast).